A 333-amino-acid polypeptide reads, in one-letter code: NADH-quinone oxidoreductase subunit H (333 aa).

8 helical membrane passes run 8-28 (VLAA…YLVW), 75-95 (ILFM…FVTI), 108-128 (IGLL…LLAG), 154-174 (MLIT…IEIV), 191-211 (PGLF…CSLA), 251-271 (IVIG…CPFG), 273-293 (FPGV…FIWI), and 312-332 (ILIP…KVFA).

This sequence belongs to the complex I subunit 1 family. As to quaternary structure, NDH-1 is composed of 14 different subunits. Subunits NuoA, H, J, K, L, M, N constitute the membrane sector of the complex.

It is found in the cell inner membrane. It catalyses the reaction a quinone + NADH + 5 H(+)(in) = a quinol + NAD(+) + 4 H(+)(out). In terms of biological role, NDH-1 shuttles electrons from NADH, via FMN and iron-sulfur (Fe-S) centers, to quinones in the respiratory chain. The immediate electron acceptor for the enzyme in this species is believed to be ubiquinone. Couples the redox reaction to proton translocation (for every two electrons transferred, four hydrogen ions are translocated across the cytoplasmic membrane), and thus conserves the redox energy in a proton gradient. This subunit may bind ubiquinone. In Desulfotalea psychrophila (strain LSv54 / DSM 12343), this protein is NADH-quinone oxidoreductase subunit H.